The following is a 72-amino-acid chain: VKRPMNAFMVWSQNERRKIMDQWPDMHNAEISKRLGRPWQLLQDSEKIPFVKEAGRLRVKHMADYPNYKYRP.

Residues 1 to 69 (VKRPMNAFMV…KHMADYPNYK (69 aa)) constitute a DNA-binding region (HMG box).

It is found in the nucleus. This Tarentola mauritanica (Common wall gecko) protein is SRY-related protein MG42.